The sequence spans 351 residues: UDP-N-acetylglucosamine--N-acetylmuramyl-(pentapeptide) pyrophosphoryl-undecaprenol N-acetylglucosamine transferase (351 aa).

Residues 13–15 (TGG), Asn125, Arg161, Ser189, Ile241, 260–265 (ALTVCE), and Gln285 contribute to the UDP-N-acetyl-alpha-D-glucosamine site.

Belongs to the glycosyltransferase 28 family. MurG subfamily.

It localises to the cell inner membrane. It carries out the reaction di-trans,octa-cis-undecaprenyl diphospho-N-acetyl-alpha-D-muramoyl-L-alanyl-D-glutamyl-meso-2,6-diaminopimeloyl-D-alanyl-D-alanine + UDP-N-acetyl-alpha-D-glucosamine = di-trans,octa-cis-undecaprenyl diphospho-[N-acetyl-alpha-D-glucosaminyl-(1-&gt;4)]-N-acetyl-alpha-D-muramoyl-L-alanyl-D-glutamyl-meso-2,6-diaminopimeloyl-D-alanyl-D-alanine + UDP + H(+). Its pathway is cell wall biogenesis; peptidoglycan biosynthesis. Cell wall formation. Catalyzes the transfer of a GlcNAc subunit on undecaprenyl-pyrophosphoryl-MurNAc-pentapeptide (lipid intermediate I) to form undecaprenyl-pyrophosphoryl-MurNAc-(pentapeptide)GlcNAc (lipid intermediate II). The polypeptide is UDP-N-acetylglucosamine--N-acetylmuramyl-(pentapeptide) pyrophosphoryl-undecaprenol N-acetylglucosamine transferase (Haemophilus influenzae (strain PittEE)).